The following is a 419-amino-acid chain: UDP-N-acetylglucosamine 1-carboxyvinyltransferase 2 (419 aa).

Phosphoenolpyruvate is bound at residue 22–23 (KN). Residue R92 coordinates UDP-N-acetyl-alpha-D-glucosamine. Residue C116 is the Proton donor of the active site. Residue C116 is modified to 2-(S-cysteinyl)pyruvic acid O-phosphothioketal. UDP-N-acetyl-alpha-D-glucosamine-binding positions include 121–125 (RPIDL), D306, and I328.

This sequence belongs to the EPSP synthase family. MurA subfamily.

The protein resides in the cytoplasm. The enzyme catalyses phosphoenolpyruvate + UDP-N-acetyl-alpha-D-glucosamine = UDP-N-acetyl-3-O-(1-carboxyvinyl)-alpha-D-glucosamine + phosphate. The protein operates within cell wall biogenesis; peptidoglycan biosynthesis. Functionally, cell wall formation. Adds enolpyruvyl to UDP-N-acetylglucosamine. In Streptococcus pyogenes serotype M3 (strain ATCC BAA-595 / MGAS315), this protein is UDP-N-acetylglucosamine 1-carboxyvinyltransferase 2.